The primary structure comprises 569 residues: Proline--tRNA ligase (569 aa).

Belongs to the class-II aminoacyl-tRNA synthetase family. ProS type 1 subfamily. In terms of assembly, homodimer.

It localises to the cytoplasm. The enzyme catalyses tRNA(Pro) + L-proline + ATP = L-prolyl-tRNA(Pro) + AMP + diphosphate. Catalyzes the attachment of proline to tRNA(Pro) in a two-step reaction: proline is first activated by ATP to form Pro-AMP and then transferred to the acceptor end of tRNA(Pro). As ProRS can inadvertently accommodate and process non-cognate amino acids such as alanine and cysteine, to avoid such errors it has two additional distinct editing activities against alanine. One activity is designated as 'pretransfer' editing and involves the tRNA(Pro)-independent hydrolysis of activated Ala-AMP. The other activity is designated 'posttransfer' editing and involves deacylation of mischarged Ala-tRNA(Pro). The misacylated Cys-tRNA(Pro) is not edited by ProRS. The chain is Proline--tRNA ligase from Campylobacter jejuni subsp. jejuni serotype O:23/36 (strain 81-176).